Consider the following 449-residue polypeptide: Probable protoheme IX farnesyltransferase, mitochondrial (449 aa).

The segment covering 99–138 has biased composition (low complexity); sequence TTSTTTTTNINENNIKNENNNENNNENSNNNNEQSIKSNQ. The interval 99–140 is disordered; sequence TTSTTTTTNINENNIKNENNNENNNENSNNNNEQSIKSNQTK. Helical transmembrane passes span 163 to 183, 245 to 267, 279 to 299, 303 to 323, 352 to 372, 374 to 394, and 402 to 422; these read LTAIAGYVAACPIGAFDWVVL, MAVTPSLFVPGTLAACNVILYCW, TWIGAFVGAIPPLIGSVAATG, AIGMLLATFMYIWQIPHFLAL, SLAHALFGIPLPFIFDYFFNF, VHPITLTCMALSSASLALPFI, and LYIISLISLPITLFLSCLLRQ.

Belongs to the UbiA prenyltransferase family.

It is found in the mitochondrion membrane. In terms of biological role, converts protoheme IX and farnesyl diphosphate to heme O. The protein is Probable protoheme IX farnesyltransferase, mitochondrial (cox10) of Dictyostelium discoideum (Social amoeba).